Consider the following 268-residue polypeptide: Taurine import ATP-binding protein TauB (268 aa).

Positions 4-236 (LSIENISMRF…MGVNADLREV (233 aa)) constitute an ABC transporter domain. 41 to 48 (GPSGCGKT) lines the ATP pocket.

This sequence belongs to the ABC transporter superfamily. Taurine importer (TC 3.A.1.17.1) family. The complex is composed of two ATP-binding proteins (TauB), two transmembrane proteins (TauC) and a solute-binding protein (TauA).

The protein localises to the cell inner membrane. The catalysed reaction is taurine(out) + ATP + H2O = taurine(in) + ADP + phosphate + H(+). In terms of biological role, part of the ABC transporter complex TauABC involved in taurine import. Responsible for energy coupling to the transport system. This chain is Taurine import ATP-binding protein TauB, found in Ruegeria pomeroyi (strain ATCC 700808 / DSM 15171 / DSS-3) (Silicibacter pomeroyi).